A 100-amino-acid chain; its full sequence is Urease subunit gamma (100 aa).

It belongs to the urease gamma subunit family. As to quaternary structure, heterotrimer of UreA (gamma), UreB (beta) and UreC (alpha) subunits. Three heterotrimers associate to form the active enzyme.

Its subcellular location is the cytoplasm. It catalyses the reaction urea + 2 H2O + H(+) = hydrogencarbonate + 2 NH4(+). It participates in nitrogen metabolism; urea degradation; CO(2) and NH(3) from urea (urease route): step 1/1. In Staphylococcus aureus (strain N315), this protein is Urease subunit gamma.